A 90-amino-acid polypeptide reads, in one-letter code: Probable Fe(2+)-trafficking protein (90 aa).

Belongs to the Fe(2+)-trafficking protein family.

Functionally, could be a mediator in iron transactions between iron acquisition and iron-requiring processes, such as synthesis and/or repair of Fe-S clusters in biosynthetic enzymes. In Pseudomonas syringae pv. tomato (strain ATCC BAA-871 / DC3000), this protein is Probable Fe(2+)-trafficking protein.